The primary structure comprises 516 residues: L-amino-acid oxidase (516 aa).

The first 18 residues, 1–18 (MNVFFMFSLLFLAALGSC), serve as a signal peptide directing secretion. A disulfide bridge links Cys-28 with Cys-191. Residues 61–62 (MS), 81–82 (EA), Arg-89, and 105–108 (GPMR) contribute to the FAD site. Arg-108 provides a ligand contact to substrate. An N-linked (GlcNAc...) asparagine glycan is attached at Asn-190. His-241 contacts substrate. Residue Val-279 coordinates FAD. A disulfide bridge links Cys-349 with Cys-430. N-linked (GlcNAc...) asparagine glycosylation occurs at Asn-379. Residue Tyr-390 participates in substrate binding. Residues Glu-475, 481-486 (HGWIDS), and 482-487 (GWIDSS) contribute to the FAD site. Substrate-binding positions include 481–482 (HG) and 482–483 (GW).

This sequence belongs to the flavin monoamine oxidase family. FIG1 subfamily. In terms of assembly, homodimer; non-covalently linked. FAD is required as a cofactor. In terms of processing, N-glycosylated. As to expression, expressed by the venom gland.

Its subcellular location is the secreted. The enzyme catalyses an L-alpha-amino acid + O2 + H2O = a 2-oxocarboxylate + H2O2 + NH4(+). Its function is as follows. Catalyzes an oxidative deamination of predominantly hydrophobic and aromatic L-amino acids, thus producing hydrogen peroxide that may contribute to the diverse toxic effects of this enzyme. Exhibits diverse biological activities, such as hemorrhage, hemolysis, edema, apoptosis of vascular endothelial cells or tumor cell lines, antibacterial and antiparasitic activities, as well as regulation of platelet aggregation. Effects of snake L-amino oxidases on platelets are controversial, since they either induce aggregation or inhibit agonist-induced aggregation. These different effects are probably due to different experimental conditions. Displays dose-dependent inhibition on HIV-1 infection and replication. This chain is L-amino-acid oxidase, found in Trimeresurus stejnegeri (Chinese green tree viper).